We begin with the raw amino-acid sequence, 478 residues long: Protein nucleotidyltransferase YdiU (478 aa).

Residues glycine 84, glycine 86, arginine 87, lysine 107, aspartate 119, glycine 120, arginine 170, and arginine 177 each coordinate ATP. The active-site Proton acceptor is aspartate 246. Positions 247 and 256 each coordinate Mg(2+). Aspartate 256 is an ATP binding site.

The protein belongs to the SELO family. The cofactor is Mg(2+). Requires Mn(2+) as cofactor.

The catalysed reaction is L-seryl-[protein] + ATP = 3-O-(5'-adenylyl)-L-seryl-[protein] + diphosphate. It carries out the reaction L-threonyl-[protein] + ATP = 3-O-(5'-adenylyl)-L-threonyl-[protein] + diphosphate. The enzyme catalyses L-tyrosyl-[protein] + ATP = O-(5'-adenylyl)-L-tyrosyl-[protein] + diphosphate. It catalyses the reaction L-histidyl-[protein] + UTP = N(tele)-(5'-uridylyl)-L-histidyl-[protein] + diphosphate. The catalysed reaction is L-seryl-[protein] + UTP = O-(5'-uridylyl)-L-seryl-[protein] + diphosphate. It carries out the reaction L-tyrosyl-[protein] + UTP = O-(5'-uridylyl)-L-tyrosyl-[protein] + diphosphate. Nucleotidyltransferase involved in the post-translational modification of proteins. It can catalyze the addition of adenosine monophosphate (AMP) or uridine monophosphate (UMP) to a protein, resulting in modifications known as AMPylation and UMPylation. This chain is Protein nucleotidyltransferase YdiU, found in Escherichia coli O17:K52:H18 (strain UMN026 / ExPEC).